We begin with the raw amino-acid sequence, 212 residues long: Ropporin-1 (212 aa).

The region spanning 12-43 (PELPELLKQFTKAAIRSQPQDLIQWAAEYFGA) is the RIIa domain. At Ser-56 the chain carries Phosphoserine. Residues 209-212 (VRLE) are interaction with RHPN1.

Belongs to the ropporin family. In terms of assembly, homodimer. Interacts with AKAP3. May interact with SPA17. Interacts with RHPN1. Interacts with FSCB; the interaction increases upon spermatozoa capacitation conditions. Interacts with CFAP61. Sumoylated, sumoylation decreases upon spermatozoa capacitation conditions.

Its subcellular location is the cell projection. The protein localises to the cilium. It localises to the flagellum. Its function is as follows. Important for male fertility. With ROPN1L, involved in fibrous sheath integrity and sperm motility, plays a role in PKA-dependent signaling processes required for spermatozoa capacitation. The polypeptide is Ropporin-1 (ROPN1) (Bos taurus (Bovine)).